A 67-amino-acid polypeptide reads, in one-letter code: ATP synthase F(0) complex subunit 8 (67 aa).

A helical membrane pass occupies residues 8–24 (TWFIMIFSMFLTLFILF). An N6-acetyllysine; alternate modification is found at Lys-54. The residue at position 54 (Lys-54) is an N6-succinyllysine; alternate. Lys-57 bears the N6-acetyllysine mark.

The protein belongs to the ATPase protein 8 family. As to quaternary structure, component of the ATP synthase complex composed at least of ATP5F1A/subunit alpha, ATP5F1B/subunit beta, ATP5MC1/subunit c (homooctomer), MT-ATP6/subunit a, MT-ATP8/subunit 8, ATP5ME/subunit e, ATP5MF/subunit f, ATP5MG/subunit g, ATP5MK/subunit k, ATP5MJ/subunit j, ATP5F1C/subunit gamma, ATP5F1D/subunit delta, ATP5F1E/subunit epsilon, ATP5PF/subunit F6, ATP5PB/subunit b, ATP5PD/subunit d, ATP5PO/subunit OSCP. ATP synthase complex consists of a soluble F(1) head domain (subunits alpha(3) and beta(3)) - the catalytic core - and a membrane F(0) domain - the membrane proton channel (subunits c, a, 8, e, f, g, k and j). These two domains are linked by a central stalk (subunits gamma, delta, and epsilon) rotating inside the F1 region and a stationary peripheral stalk (subunits F6, b, d, and OSCP). Interacts with PRICKLE3.

The protein localises to the mitochondrion membrane. Functionally, subunit 8, of the mitochondrial membrane ATP synthase complex (F(1)F(0) ATP synthase or Complex V) that produces ATP from ADP in the presence of a proton gradient across the membrane which is generated by electron transport complexes of the respiratory chain. ATP synthase complex consist of a soluble F(1) head domain - the catalytic core - and a membrane F(1) domain - the membrane proton channel. These two domains are linked by a central stalk rotating inside the F(1) region and a stationary peripheral stalk. During catalysis, ATP synthesis in the catalytic domain of F(1) is coupled via a rotary mechanism of the central stalk subunits to proton translocation. In vivo, can only synthesize ATP although its ATP hydrolase activity can be activated artificially in vitro. Part of the complex F(0) domain. The sequence is that of ATP synthase F(0) complex subunit 8 from Canis lupus familiaris (Dog).